The primary structure comprises 504 residues: Anaerobic nitric oxide reductase transcription regulator NorR (504 aa).

The residue at position 57 (aspartate 57) is a 4-aspartylphosphate. Positions methionine 187–valine 416 constitute a Sigma-54 factor interaction domain. ATP contacts are provided by residues glycine 215–glutamate 222 and alanine 278–glutamate 287. Positions tryptophan 479–lysine 498 form a DNA-binding region, H-T-H motif.

It participates in nitrogen metabolism; nitric oxide reduction. Functionally, required for the expression of anaerobic nitric oxide (NO) reductase, acts as a transcriptional activator for at least the norVW operon. Activation also requires sigma-54. The chain is Anaerobic nitric oxide reductase transcription regulator NorR from Escherichia coli (strain ATCC 8739 / DSM 1576 / NBRC 3972 / NCIMB 8545 / WDCM 00012 / Crooks).